The sequence spans 170 residues: Xanthine-guanine phosphoribosyltransferase (170 aa).

Residues 41–42 (RG) and 98–106 (DDLTDTGKT) contribute to the 5-phospho-alpha-D-ribose 1-diphosphate site. Position 99 (Asp99) interacts with Mg(2+). A guanine-binding site is contributed by Asp102. A xanthine-binding site is contributed by Asp102. GMP is bound at residue 102–106 (DTGKT).

This sequence belongs to the purine/pyrimidine phosphoribosyltransferase family. XGPT subfamily. As to quaternary structure, homotetramer. Mg(2+) serves as cofactor.

It is found in the cell inner membrane. The enzyme catalyses GMP + diphosphate = guanine + 5-phospho-alpha-D-ribose 1-diphosphate. It carries out the reaction XMP + diphosphate = xanthine + 5-phospho-alpha-D-ribose 1-diphosphate. The catalysed reaction is IMP + diphosphate = hypoxanthine + 5-phospho-alpha-D-ribose 1-diphosphate. It functions in the pathway purine metabolism; GMP biosynthesis via salvage pathway; GMP from guanine: step 1/1. The protein operates within purine metabolism; XMP biosynthesis via salvage pathway; XMP from xanthine: step 1/1. Functionally, purine salvage pathway enzyme that catalyzes the transfer of the ribosyl-5-phosphate group from 5-phospho-alpha-D-ribose 1-diphosphate (PRPP) to the N9 position of the 6-oxopurines guanine and xanthine to form the corresponding ribonucleotides GMP (guanosine 5'-monophosphate) and XMP (xanthosine 5'-monophosphate), with the release of PPi. To a lesser extent, also acts on hypoxanthine. This Brucella abortus (strain 2308) protein is Xanthine-guanine phosphoribosyltransferase.